The following is a 299-amino-acid chain: tRNA pseudouridine synthase B (299 aa).

Catalysis depends on Asp-45, which acts as the Nucleophile.

Belongs to the pseudouridine synthase TruB family. Type 1 subfamily.

It catalyses the reaction uridine(55) in tRNA = pseudouridine(55) in tRNA. Responsible for synthesis of pseudouridine from uracil-55 in the psi GC loop of transfer RNAs. The protein is tRNA pseudouridine synthase B of Streptomyces griseus subsp. griseus (strain JCM 4626 / CBS 651.72 / NBRC 13350 / KCC S-0626 / ISP 5235).